A 128-amino-acid polypeptide reads, in one-letter code: Large ribosomal subunit protein bL17 (128 aa).

It belongs to the bacterial ribosomal protein bL17 family. Part of the 50S ribosomal subunit. Contacts protein L32.

This Pseudomonas syringae pv. tomato (strain ATCC BAA-871 / DC3000) protein is Large ribosomal subunit protein bL17.